A 276-amino-acid chain; its full sequence is uncharacterized protein (276 aa).

Residues proline 20–serine 137 form the AB hydrolase-1 domain. The tract at residues glycine 57–tyrosine 76 is disordered.

It belongs to the AB hydrolase superfamily.

This is an uncharacterized protein from Staphylococcus aureus (strain bovine RF122 / ET3-1).